We begin with the raw amino-acid sequence, 370 residues long: 4-hydroxy-3-methylbut-2-en-1-yl diphosphate synthase (flavodoxin) (370 aa).

[4Fe-4S] cluster contacts are provided by cysteine 270, cysteine 273, cysteine 305, and glutamate 312.

This sequence belongs to the IspG family. [4Fe-4S] cluster is required as a cofactor.

It catalyses the reaction (2E)-4-hydroxy-3-methylbut-2-enyl diphosphate + oxidized [flavodoxin] + H2O + 2 H(+) = 2-C-methyl-D-erythritol 2,4-cyclic diphosphate + reduced [flavodoxin]. The protein operates within isoprenoid biosynthesis; isopentenyl diphosphate biosynthesis via DXP pathway; isopentenyl diphosphate from 1-deoxy-D-xylulose 5-phosphate: step 5/6. Converts 2C-methyl-D-erythritol 2,4-cyclodiphosphate (ME-2,4cPP) into 1-hydroxy-2-methyl-2-(E)-butenyl 4-diphosphate. The sequence is that of 4-hydroxy-3-methylbut-2-en-1-yl diphosphate synthase (flavodoxin) from Hamiltonella defensa subsp. Acyrthosiphon pisum (strain 5AT).